Here is a 227-residue protein sequence, read N- to C-terminus: Transmembrane emp24 domain-containing protein 1 (227 aa).

An N-terminal signal peptide occupies residues 1-23; it reads MMAAGAALALALWLLMPPVGVGG. Residues 24–194 lie on the Extracellular side of the membrane; that stretch reads AGPPPIQDGE…LQEGNLERVN (171 aa). One can recognise a GOLD domain in the interval 43-125; sequence KQCFYQSAPA…EKLVFFELIF (83 aa). A coiled-coil region spans residues 145–170; sequence EMLDVKMEDIKESIETMRTRLERSIQ. A helical membrane pass occupies residues 195-215; that stretch reads FWSAVNVAVLLLVAVLQVCTL. At 216 to 227 the chain is on the cytoplasmic side; sequence KRFFQDKRPVPT. The COPII vesicle coat-binding signature appears at 218–219; sequence FF. The COPI vesicle coat-binding motif lies at 218-227; sequence FFQDKRPVPT.

It belongs to the EMP24/GP25L family. As to quaternary structure, homodimer in endoplasmic reticulum, endoplasmic reticulum-Golgi intermediate compartment and cis-Golgi network. Interacts with IL1RL1. Interacts with RNF26; this interaction is important to modulate innate immune signaling through the cGAS-STING pathway.

It is found in the cell membrane. The protein localises to the endoplasmic reticulum membrane. Its subcellular location is the golgi apparatus. The protein resides in the cis-Golgi network membrane. It localises to the endoplasmic reticulum-Golgi intermediate compartment membrane. In terms of biological role, potential role in vesicular protein trafficking, mainly in the early secretory pathway. May act as a cargo receptor at the lumenal side for incorporation of secretory cargo molecules into transport vesicles and may be involved in vesicle coat formation at the cytoplasmic side. Plays a positive role in IL-33-mediated IL-8 and IL-6 production by interacting with interleukin-33 receptor IL1RL1. Plays also a role in the modulation of innate immune signaling through the cGAS-STING pathway by interacting with RNF26. This chain is Transmembrane emp24 domain-containing protein 1 (TMED1), found in Pongo abelii (Sumatran orangutan).